A 290-amino-acid chain; its full sequence is uncharacterized protein (290 aa).

The active-site Schiff-base intermediate with substrate is K203.

It belongs to the DeoC/FbaB aldolase family.

This is an uncharacterized protein from Pasteurella multocida (strain Pm70).